Here is a 115-residue protein sequence, read N- to C-terminus: MLPLCLTFLSFFLSLGGSFKAVMTKEEADGTTEAAACLFWIFNWTVTLIPLNSLVALAISSPTFFGDRPKGPIFGAKAAEAPTSPPTALRYKYLTSLGSNFGGIFVYPLFLLSTF.

A signal peptide spans 1–24 (MLPLCLTFLSFFLSLGGSFKAVMT). Helical transmembrane passes span 39 to 59 (FWIF…ALAI) and 93 to 113 (YLTS…FLLS).

It localises to the membrane. This is an uncharacterized protein from Saccharomyces cerevisiae (strain ATCC 204508 / S288c) (Baker's yeast).